The chain runs to 402 residues: Phosphoglycerate kinase (402 aa).

Substrate is bound by residues 30–32, arginine 46, 70–73, arginine 126, and arginine 159; these read DFN and HLGR. ATP contacts are provided by residues lysine 210, glutamate 332, and 358-361; that span reads GGDT.

The protein belongs to the phosphoglycerate kinase family. As to quaternary structure, monomer.

The protein resides in the cytoplasm. It catalyses the reaction (2R)-3-phosphoglycerate + ATP = (2R)-3-phospho-glyceroyl phosphate + ADP. Its pathway is carbohydrate degradation; glycolysis; pyruvate from D-glyceraldehyde 3-phosphate: step 2/5. The sequence is that of Phosphoglycerate kinase from Helicobacter hepaticus (strain ATCC 51449 / 3B1).